The primary structure comprises 419 residues: WD repeat-containing protein JIP5 (419 aa).

WD repeat units lie at residues 4 to 45 (ALSS…HNQS), 66 to 105 (PSHK…VKAR), 108 to 147 (RAHE…EGDA), 180 to 220 (DQED…KGVE), 224 to 263 (DQED…LDHA), 268 to 308 (GHPS…GIVG), and 351 to 390 (DAAE…QPPP). The tract at residues 172 to 192 (DPPRSKKKDQEDDLKRKRDEE) is disordered. The disordered stretch occupies residues 372–408 (SADGSDESAGESDVMQPPPATKRRTAKSKAGKKSVHD). Residues 392-404 (TKRRTAKSKAGKK) are compositionally biased toward basic residues.

Belongs to the WD repeat WDR55 family.

The protein resides in the nucleus. It is found in the nucleolus. This is WD repeat-containing protein JIP5 (JIP5) from Malassezia globosa (strain ATCC MYA-4612 / CBS 7966) (Dandruff-associated fungus).